The primary structure comprises 173 residues: Large ribosomal subunit protein uL16 (173 aa).

Belongs to the universal ribosomal protein uL16 family.

In Methanococcus maripaludis (strain C5 / ATCC BAA-1333), this protein is Large ribosomal subunit protein uL16.